A 157-amino-acid chain; its full sequence is 2-C-methyl-D-erythritol 2,4-cyclodiphosphate synthase (157 aa).

A divalent metal cation contacts are provided by aspartate 9 and histidine 11. 4-CDP-2-C-methyl-D-erythritol 2-phosphate is bound by residues 9-11 and 35-36; these read DVH and HS. Histidine 43 serves as a coordination point for a divalent metal cation. 4-CDP-2-C-methyl-D-erythritol 2-phosphate contacts are provided by residues 57-59, 62-66, 101-107, 133-136, phenylalanine 140, and arginine 143; these read DIG, FPDTD, AEKPKMA, and TTTE.

The protein belongs to the IspF family. Homotrimer. A divalent metal cation is required as a cofactor.

The enzyme catalyses 4-CDP-2-C-methyl-D-erythritol 2-phosphate = 2-C-methyl-D-erythritol 2,4-cyclic diphosphate + CMP. It participates in isoprenoid biosynthesis; isopentenyl diphosphate biosynthesis via DXP pathway; isopentenyl diphosphate from 1-deoxy-D-xylulose 5-phosphate: step 4/6. Involved in the biosynthesis of isopentenyl diphosphate (IPP) and dimethylallyl diphosphate (DMAPP), two major building blocks of isoprenoid compounds. Catalyzes the conversion of 4-diphosphocytidyl-2-C-methyl-D-erythritol 2-phosphate (CDP-ME2P) to 2-C-methyl-D-erythritol 2,4-cyclodiphosphate (ME-CPP) with a corresponding release of cytidine 5-monophosphate (CMP). This is 2-C-methyl-D-erythritol 2,4-cyclodiphosphate synthase from Listeria monocytogenes serotype 4a (strain HCC23).